The chain runs to 169 residues: Allophycocyanin subunit beta-18 (169 aa).

N4-methylasparagine is present on Asn-72. Cys-82 contacts (2R,3E)-phycocyanobilin.

This sequence belongs to the phycobiliprotein family. As to quaternary structure, heterodimer of an alpha and a beta chain. Contains one covalently linked phycocyanobilin chromophore.

It is found in the plastid. The protein resides in the cyanelle thylakoid membrane. Light-harvesting photosynthetic bile pigment-protein from the phycobiliprotein complex. Allophycocyanin has a maximum absorption at approximately 650 nanometers. This Cyanophora paradoxa protein is Allophycocyanin subunit beta-18 (apcF).